Here is a 468-residue protein sequence, read N- to C-terminus: Phosphomethylpyrimidine synthase (468 aa).

Substrate contacts are provided by residues Asn-82, Met-111, Tyr-141, His-177, 197–199 (SRG), 238–241 (DSLR), and Glu-277. His-281 contacts Zn(2+). Position 304 (Tyr-304) interacts with substrate. His-345 is a Zn(2+) binding site. The [4Fe-4S] cluster site is built by Cys-425, Cys-428, and Cys-433.

It belongs to the ThiC family. The cofactor is [4Fe-4S] cluster.

The catalysed reaction is 5-amino-1-(5-phospho-beta-D-ribosyl)imidazole + S-adenosyl-L-methionine = 4-amino-2-methyl-5-(phosphooxymethyl)pyrimidine + CO + 5'-deoxyadenosine + formate + L-methionine + 3 H(+). It participates in cofactor biosynthesis; thiamine diphosphate biosynthesis. Catalyzes the synthesis of the hydroxymethylpyrimidine phosphate (HMP-P) moiety of thiamine from aminoimidazole ribotide (AIR) in a radical S-adenosyl-L-methionine (SAM)-dependent reaction. This is Phosphomethylpyrimidine synthase from Prochlorococcus marinus (strain SARG / CCMP1375 / SS120).